A 341-amino-acid chain; its full sequence is Anthranilate phosphoribosyltransferase (341 aa).

Residues Gly-85, 88–89, Thr-93, 95–98, 113–121, and Ser-125 each bind 5-phospho-alpha-D-ribose 1-diphosphate; these read GD, NIST, and KHGNRSASG. Gly-85 lines the anthranilate pocket. Ser-97 lines the Mg(2+) pocket. Position 116 (Asn-116) interacts with anthranilate. Residue Arg-171 coordinates anthranilate. Residues Asp-230 and Glu-231 each contribute to the Mg(2+) site.

The protein belongs to the anthranilate phosphoribosyltransferase family. In terms of assembly, homodimer. Requires Mg(2+) as cofactor.

The catalysed reaction is N-(5-phospho-beta-D-ribosyl)anthranilate + diphosphate = 5-phospho-alpha-D-ribose 1-diphosphate + anthranilate. It functions in the pathway amino-acid biosynthesis; L-tryptophan biosynthesis; L-tryptophan from chorismate: step 2/5. In terms of biological role, catalyzes the transfer of the phosphoribosyl group of 5-phosphorylribose-1-pyrophosphate (PRPP) to anthranilate to yield N-(5'-phosphoribosyl)-anthranilate (PRA). The sequence is that of Anthranilate phosphoribosyltransferase from Prochlorococcus marinus (strain SARG / CCMP1375 / SS120).